Here is a 470-residue protein sequence, read N- to C-terminus: Velvet complex subunit B (470 aa).

2 disordered regions span residues 1 to 148 and 223 to 321; these read MNSS…EEGT and VRSS…NPLF. Residues 15 to 37 show a composition bias toward low complexity; it reads PGPGYSSSVPPPIHAYQQQQQHQ. The segment covering 38-49 has biased composition (pro residues); it reads HPPPSLLPPPPT. The span at 74 to 86 shows a compositional bias: basic residues; the sequence is HQHHAPPPPHHHS. Residues 102 to 124 are compositionally biased toward pro residues; the sequence is NQYPRPHPLPPSRNDEPPPPSSE. The Velvet domain occupies 147 to 452; sequence GTGLKYSLDV…ALQGIKIPIR (306 aa). The segment covering 232–241 has biased composition (low complexity); it reads GASSNNYSYS. Over residues 242 to 255 the composition is skewed to polar residues; that stretch reads TLEPSTPSYQQQAL. A compositionally biased stretch (low complexity) spans 280–301; sequence QQGYGQAPSYQSSSSYGPPQQY. A compositionally biased stretch (polar residues) spans 307-318; it reads GYNTDPPASSAN.

Belongs to the velvet family. VelB subfamily. Component of the heterotrimeric velvet complex composed of laeA, veA and velB; VeA acting as a bridging protein between laeA and velB. Forms a heterodimeric complex with vosA; the formation of the velB-vosA complex is light-dependent.

The protein resides in the nucleus. It localises to the cytoplasm. Functionally, component of the velvet transcription factor complex that controls sexual/asexual developmental ratio in response to light, promoting sexual development in the darkness while stimulating asexual sporulation under illumination. The velvet complex acts as a global regulator for secondary metabolite gene expression. Component of the velB-VosA heterodimeric complex that plays a dual role in activating genes associated with spore maturation and repressing certain development-associated genes. The complex binds DNA through the DNA-binding domain of vosA that recognizes an 11-nucleotide consensus sequence 5'-CTGGCCGCGGC-3' consisting of two motifs in the promoters of key developmental regulatory genes. Controls the expression of the pink pigment aurofusarin and the mycotoxin deoxynivalenol gene clusters. Regulates hyphae formation, hyphal hydrophobicity and conidiation. Regulates of cell wall integrity and pathogenicity. The chain is Velvet complex subunit B from Gibberella zeae (strain ATCC MYA-4620 / CBS 123657 / FGSC 9075 / NRRL 31084 / PH-1) (Wheat head blight fungus).